The sequence spans 525 residues: Bifunctional purine biosynthesis protein PurH (525 aa).

The 145-residue stretch at 1–145 folds into the MGS-like domain; it reads MSNVERALIS…KNNASVGIVT (145 aa).

Belongs to the PurH family.

It carries out the reaction (6R)-10-formyltetrahydrofolate + 5-amino-1-(5-phospho-beta-D-ribosyl)imidazole-4-carboxamide = 5-formamido-1-(5-phospho-D-ribosyl)imidazole-4-carboxamide + (6S)-5,6,7,8-tetrahydrofolate. It catalyses the reaction IMP + H2O = 5-formamido-1-(5-phospho-D-ribosyl)imidazole-4-carboxamide. The protein operates within purine metabolism; IMP biosynthesis via de novo pathway; 5-formamido-1-(5-phospho-D-ribosyl)imidazole-4-carboxamide from 5-amino-1-(5-phospho-D-ribosyl)imidazole-4-carboxamide (10-formyl THF route): step 1/1. It functions in the pathway purine metabolism; IMP biosynthesis via de novo pathway; IMP from 5-formamido-1-(5-phospho-D-ribosyl)imidazole-4-carboxamide: step 1/1. This Alcanivorax borkumensis (strain ATCC 700651 / DSM 11573 / NCIMB 13689 / SK2) protein is Bifunctional purine biosynthesis protein PurH.